A 344-amino-acid polypeptide reads, in one-letter code: GDSL esterase/lipase At2g19010 (344 aa).

An N-terminal signal peptide occupies residues 1-21 (MSKACWLVAAIIFTAATVVYG). Serine 33 functions as the Nucleophile in the catalytic mechanism. N-linked (GlcNAc...) asparagine glycosylation is present at asparagine 303. Catalysis depends on residues aspartate 311 and histidine 314.

It belongs to the 'GDSL' lipolytic enzyme family.

It localises to the secreted. This chain is GDSL esterase/lipase At2g19010, found in Arabidopsis thaliana (Mouse-ear cress).